Consider the following 295-residue polypeptide: Bifunctional protein FolD (295 aa).

NADP(+)-binding positions include 165–167 (GRG), serine 192, and isoleucine 233.

Belongs to the tetrahydrofolate dehydrogenase/cyclohydrolase family. In terms of assembly, homodimer.

It catalyses the reaction (6R)-5,10-methylene-5,6,7,8-tetrahydrofolate + NADP(+) = (6R)-5,10-methenyltetrahydrofolate + NADPH. The enzyme catalyses (6R)-5,10-methenyltetrahydrofolate + H2O = (6R)-10-formyltetrahydrofolate + H(+). Its pathway is one-carbon metabolism; tetrahydrofolate interconversion. Catalyzes the oxidation of 5,10-methylenetetrahydrofolate to 5,10-methenyltetrahydrofolate and then the hydrolysis of 5,10-methenyltetrahydrofolate to 10-formyltetrahydrofolate. The chain is Bifunctional protein FolD from Tropheryma whipplei (strain Twist) (Whipple's bacillus).